The sequence spans 516 residues: GMP synthase [glutamine-hydrolyzing] (516 aa).

Positions 8 to 198 (KILILDFGSQ…ALNICKCDAL (191 aa)) constitute a Glutamine amidotransferase type-1 domain. C84 serves as the catalytic Nucleophile. Residues H172 and E174 contribute to the active site. The GMPS ATP-PPase domain occupies 199–391 (WNIENIIEND…LGLPYNMLYR (193 aa)). 226-232 (SGGVDSS) is an ATP binding site.

Homodimer.

The enzyme catalyses XMP + L-glutamine + ATP + H2O = GMP + L-glutamate + AMP + diphosphate + 2 H(+). It functions in the pathway purine metabolism; GMP biosynthesis; GMP from XMP (L-Gln route): step 1/1. Functionally, catalyzes the synthesis of GMP from XMP. The sequence is that of GMP synthase [glutamine-hydrolyzing] from Francisella philomiragia subsp. philomiragia (strain ATCC 25017 / CCUG 19701 / FSC 153 / O#319-036).